Reading from the N-terminus, the 625-residue chain is 1-deoxy-D-xylulose-5-phosphate synthase (625 aa).

Residues His-80 and 121–123 each bind thiamine diphosphate; that span reads GHS. A Mg(2+)-binding site is contributed by Asp-152. Residues 153–154, Asn-181, Tyr-290, and Glu-371 contribute to the thiamine diphosphate site; that span reads GA. Asn-181 contacts Mg(2+).

The protein belongs to the transketolase family. DXPS subfamily. Homodimer. Mg(2+) serves as cofactor. The cofactor is thiamine diphosphate.

It catalyses the reaction D-glyceraldehyde 3-phosphate + pyruvate + H(+) = 1-deoxy-D-xylulose 5-phosphate + CO2. Its pathway is metabolic intermediate biosynthesis; 1-deoxy-D-xylulose 5-phosphate biosynthesis; 1-deoxy-D-xylulose 5-phosphate from D-glyceraldehyde 3-phosphate and pyruvate: step 1/1. Functionally, catalyzes the acyloin condensation reaction between C atoms 2 and 3 of pyruvate and glyceraldehyde 3-phosphate to yield 1-deoxy-D-xylulose-5-phosphate (DXP). The protein is 1-deoxy-D-xylulose-5-phosphate synthase of Haemophilus influenzae (strain ATCC 51907 / DSM 11121 / KW20 / Rd).